A 107-amino-acid polypeptide reads, in one-letter code: Thiosulfate sulfurtransferase GlpE (107 aa).

Positions 17 to 105 (ADDNALLVDI…WRIAFPQQVS (89 aa)) constitute a Rhodanese domain. The Cysteine persulfide intermediate role is filled by Cys-65.

Belongs to the GlpE family.

The protein resides in the cytoplasm. It catalyses the reaction thiosulfate + hydrogen cyanide = thiocyanate + sulfite + 2 H(+). The catalysed reaction is thiosulfate + [thioredoxin]-dithiol = [thioredoxin]-disulfide + hydrogen sulfide + sulfite + 2 H(+). Its function is as follows. Transferase that catalyzes the transfer of sulfur from thiosulfate to thiophilic acceptors such as cyanide or dithiols. May function in a CysM-independent thiosulfate assimilation pathway by catalyzing the conversion of thiosulfate to sulfite, which can then be used for L-cysteine biosynthesis. This Erwinia tasmaniensis (strain DSM 17950 / CFBP 7177 / CIP 109463 / NCPPB 4357 / Et1/99) protein is Thiosulfate sulfurtransferase GlpE.